Reading from the N-terminus, the 304-residue chain is Phosphatidylserine decarboxylase proenzyme (304 aa).

Residues Asp-90, His-147, and Ser-253 each act as charge relay system; for autoendoproteolytic cleavage activity in the active site. Residue Ser-253 is the Schiff-base intermediate with substrate; via pyruvic acid; for decarboxylase activity of the active site. Residue Ser-253 is modified to Pyruvic acid (Ser); by autocatalysis.

This sequence belongs to the phosphatidylserine decarboxylase family. PSD-B subfamily. Prokaryotic type I sub-subfamily. Heterodimer of a large membrane-associated beta subunit and a small pyruvoyl-containing alpha subunit. It depends on pyruvate as a cofactor. Post-translationally, is synthesized initially as an inactive proenzyme. Formation of the active enzyme involves a self-maturation process in which the active site pyruvoyl group is generated from an internal serine residue via an autocatalytic post-translational modification. Two non-identical subunits are generated from the proenzyme in this reaction, and the pyruvate is formed at the N-terminus of the alpha chain, which is derived from the carboxyl end of the proenzyme. The autoendoproteolytic cleavage occurs by a canonical serine protease mechanism, in which the side chain hydroxyl group of the serine supplies its oxygen atom to form the C-terminus of the beta chain, while the remainder of the serine residue undergoes an oxidative deamination to produce ammonia and the pyruvoyl prosthetic group on the alpha chain. During this reaction, the Ser that is part of the protease active site of the proenzyme becomes the pyruvoyl prosthetic group, which constitutes an essential element of the active site of the mature decarboxylase.

The protein localises to the cell membrane. It catalyses the reaction a 1,2-diacyl-sn-glycero-3-phospho-L-serine + H(+) = a 1,2-diacyl-sn-glycero-3-phosphoethanolamine + CO2. It functions in the pathway phospholipid metabolism; phosphatidylethanolamine biosynthesis; phosphatidylethanolamine from CDP-diacylglycerol: step 2/2. Catalyzes the formation of phosphatidylethanolamine (PtdEtn) from phosphatidylserine (PtdSer). This is Phosphatidylserine decarboxylase proenzyme from Dickeya dadantii (strain 3937) (Erwinia chrysanthemi (strain 3937)).